Here is a 172-residue protein sequence, read N- to C-terminus: Cytidylate kinase (172 aa).

7-15 (GPPGSGTST) provides a ligand contact to ATP.

This sequence belongs to the cytidylate kinase family. Type 2 subfamily.

It localises to the cytoplasm. It catalyses the reaction CMP + ATP = CDP + ADP. The catalysed reaction is dCMP + ATP = dCDP + ADP. The protein is Cytidylate kinase of Methanothrix thermoacetophila (strain DSM 6194 / JCM 14653 / NBRC 101360 / PT) (Methanosaeta thermophila).